The sequence spans 311 residues: tRNA-cytidine(32) 2-sulfurtransferase (311 aa).

The PP-loop motif motif lies at Ser-47 to Ser-52. Residues Cys-122, Cys-125, and Cys-213 each coordinate [4Fe-4S] cluster.

It belongs to the TtcA family. Homodimer. The cofactor is Mg(2+). It depends on [4Fe-4S] cluster as a cofactor.

The protein resides in the cytoplasm. It catalyses the reaction cytidine(32) in tRNA + S-sulfanyl-L-cysteinyl-[cysteine desulfurase] + AH2 + ATP = 2-thiocytidine(32) in tRNA + L-cysteinyl-[cysteine desulfurase] + A + AMP + diphosphate + H(+). It functions in the pathway tRNA modification. Catalyzes the ATP-dependent 2-thiolation of cytidine in position 32 of tRNA, to form 2-thiocytidine (s(2)C32). The sulfur atoms are provided by the cysteine/cysteine desulfurase (IscS) system. In Salmonella paratyphi B (strain ATCC BAA-1250 / SPB7), this protein is tRNA-cytidine(32) 2-sulfurtransferase.